The primary structure comprises 536 residues: Lysosomal acid glucosylceramidase (536 aa).

An N-terminal signal peptide occupies residues 1-39; the sequence is MEFSSPSREECPKPSGRVNIMAGSLTGLLLLQAVSWASG. Cystine bridges form between Cys-43–Cys-55 and Cys-57–Cys-62. Residues Asn-58, Asn-98, and Asn-185 are each glycosylated (N-linked (GlcNAc...) asparagine). The active-site Proton donor is the Glu-274. Asn-309 is a glycosylation site (N-linked (GlcNAc...) asparagine). Glu-379 acts as the Nucleophile in catalysis. Asn-501 carries N-linked (GlcNAc...) asparagine glycosylation.

Belongs to the glycosyl hydrolase 30 family. As to quaternary structure, interacts with saposin-C. Interacts with SCARB2. Interacts with TCP1. Interacts with GRN; this interaction prevents aggregation of GBA1-SCARB2 complex via interaction with HSPA1A upon stress.

Its subcellular location is the lysosome membrane. It catalyses the reaction a beta-D-glucosyl-(1&lt;-&gt;1')-N-acylsphing-4-enine + H2O = an N-acylsphing-4-enine + D-glucose. It carries out the reaction a beta-D-galactosyl-(1&lt;-&gt;1')-N-acylsphing-4-enine + H2O = an N-acylsphing-4-enine + D-galactose. The enzyme catalyses cholesteryl 3-beta-D-glucoside + H2O = cholesterol + D-glucose. The catalysed reaction is a beta-D-glucosyl-(1&lt;-&gt;1')-N-acylsphing-4-enine + cholesterol = cholesteryl 3-beta-D-glucoside + an N-acylsphing-4-enine. It catalyses the reaction beta-D-glucosyl-N-(9Z-octadecenoyl)-sphing-4E-enine + cholesterol = N-(9Z-octadecenoyl)-sphing-4-enine + cholesteryl 3-beta-D-glucoside. It carries out the reaction beta-D-glucosyl-N-octanoylsphing-4E-enine + cholesterol = N-octanoylsphing-4-enine + cholesteryl 3-beta-D-glucoside. The enzyme catalyses beta-D-glucosyl-N-dodecanoylsphing-4-enine + cholesterol = N-dodecanoylsphing-4-enine + cholesteryl 3-beta-D-glucoside. The catalysed reaction is beta-D-glucosyl-(1&lt;-&gt;1)-N-octadecanoylsphing-4-enine + cholesterol = N-octadecanoylsphing-4-enine + cholesteryl 3-beta-D-glucoside. It catalyses the reaction beta-D-glucosyl-(1&lt;-&gt;1')-N-(15Z-tetracosenoyl)-sphing-4-enine + cholesterol = N-(15Z-tetracosenoyl)-sphing-4-enine + cholesteryl 3-beta-D-glucoside. It carries out the reaction a beta-D-galactosyl-(1&lt;-&gt;1')-N-acylsphing-4-enine + cholesterol = cholesteryl 3-beta-D-galactoside + an N-acylsphing-4-enine. The enzyme catalyses 1-(beta-D-galactosyl)-N-dodecanoylsphing-4-enine + cholesterol = cholesteryl 3-beta-D-galactoside + N-dodecanoylsphing-4-enine. The catalysed reaction is a beta-D-xylosyl-(1&lt;-&gt;1')-N-acylsphing-4-enine + cholesterol = cholesteryl 3-beta-D-xyloside + an N-acylsphing-4-enine. It catalyses the reaction beta-D-xylosyl-(1&lt;-&gt;1')-N-(9Z-octadecenoyl)-sphing-4-enine + cholesterol = cholesteryl 3-beta-D-xyloside + N-(9Z-octadecenoyl)-sphing-4-enine. The protein operates within steroid metabolism; cholesterol metabolism. It functions in the pathway sphingolipid metabolism. In terms of biological role, glucosylceramidase that catalyzes, within the lysosomal compartment, the hydrolysis of glucosylceramides/GlcCers (such as beta-D-glucosyl-(1&lt;-&gt;1')-N-acylsphing-4-enine) into free ceramides (such as N-acylsphing-4-enine) and glucose. Plays a central role in the degradation of complex lipids and the turnover of cellular membranes. Through the production of ceramides, participates in the PKC-activated salvage pathway of ceramide formation. Catalyzes the glucosylation of cholesterol, through a transglucosylation reaction where glucose is transferred from GlcCer to cholesterol. GlcCer containing mono-unsaturated fatty acids (such as beta-D-glucosyl-N-(9Z-octadecenoyl)-sphing-4-enine) are preferred as glucose donors for cholesterol glucosylation when compared with GlcCer containing same chain length of saturated fatty acids (such as beta-D-glucosyl-N-octadecanoyl-sphing-4-enine). Under specific conditions, may alternatively catalyze the reverse reaction, transferring glucose from cholesteryl 3-beta-D-glucoside to ceramide. Can also hydrolyze cholesteryl 3-beta-D-glucoside producing glucose and cholesterol. Catalyzes the hydrolysis of galactosylceramides/GalCers (such as beta-D-galactosyl-(1&lt;-&gt;1')-N-acylsphing-4-enine), as well as the transfer of galactose between GalCers and cholesterol in vitro, but with lower activity than with GlcCers. Contrary to GlcCer and GalCer, xylosylceramide/XylCer (such as beta-D-xyosyl-(1&lt;-&gt;1')-N-acylsphing-4-enine) is not a good substrate for hydrolysis, however it is a good xylose donor for transxylosylation activity to form cholesteryl 3-beta-D-xyloside. The sequence is that of Lysosomal acid glucosylceramidase (GBA1) from Pongo abelii (Sumatran orangutan).